A 471-amino-acid polypeptide reads, in one-letter code: MSEGVDLIDIYADEEFNQDSEFNNTDQIDLYDDVLTAASQPSDDRSSSTEPPPPVRQEPAPKPNNKTPAILYTYSGLRSRRAAVYVGSFSWWTTDQQLIQVIRSIGVYDVVELKFAENRANGQSKGYAEVVVASENSVHKLLELLPGKVLNGEKVDVRPATRQNLSQFEAQARKRECVRVPRGGIPPRAHSRDSSDSADGRATPSENLVPSSARVDKPPSVLPYFNRPPSALPLMGLPPPPIPPPPPLSSSFGVPPPPPGIHYQHLMPPPPRLPPHLAVPPPGAIPPALHLNPAFFPPPNATVGPPPDTYMKASTPYNHHGSRDSGPPPSTVSEAEFEEIMKRNRAISSSAISKAVSGASAGDYSDAIETLLTAIAVIKQSRVANDERCRVLISSLKDCLHGIEAKSYSVGASGSSSRKRHRSRERSPSRSRESSRRHRDLLHNEDRHDDYFQERNREHERHRDRERDRHH.

The interval 34–68 (VLTAASQPSDDRSSSTEPPPPVRQEPAPKPNNKTP) is disordered. Over residues 50-62 (EPPPPVRQEPAPK) the composition is skewed to pro residues. One can recognise an RRM domain in the interval 82-162 (AAVYVGSFSW…EKVDVRPATR (81 aa)). A disordered region spans residues 176-220 (ECVRVPRGGIPPRAHSRDSSDSADGRATPSENLVPSSARVDKPPS). Residues 190–199 (HSRDSSDSAD) are compositionally biased toward basic and acidic residues. Thr203 is modified (phosphothreonine). Ser205 is subject to Phosphoserine. Residue Lys354 forms a Glycyl lysine isopeptide (Lys-Gly) (interchain with G-Cter in SUMO2) linkage. The interval 409-471 (SVGASGSSSR…HRDRERDRHH (63 aa)) is disordered. A phosphoserine mark is found at Ser413 and Ser423. An arg/Ser-rich domain region spans residues 418–469 (RKRHRSRERSPSRSRESSRRHRDLLHNEDRHDDYFQERNREHERHRDRERDR). Basic and acidic residues-rich tracts occupy residues 425–434 (ERSPSRSRES) and 441–471 (LLHNEDRHDDYFQERNREHERHRDRERDRHH).

Belongs to the RRM CPSF6/7 family. Component of the cleavage factor Im (CFIm) complex which is a heterotetramer composed of two subunits of NUDT21/CPSF5 and two subunits of CPSF6 or CPSF7 or a heterodimer of CPSF6 and CPSF7. The cleavage factor Im (CFIm) complex associates with the CPSF and CSTF complexes to promote the assembly of the core mRNA 3'-processing machinery. Interacts with NUDT21/CPSF5. Interacts (via Arg/Ser-rich domain) with FIP1L1 (preferentially via unphosphorylated form and Arg/Glu/Asp-rich region); this interaction mediates, at least in part, the interaction between the CFIm and CPSF complexes and may be inhibited by CPSF7 hyper-phosphorylation. In terms of processing, phosphorylated. Asymmetrically dimethylated on arginine residues by PRMT1.

The protein localises to the nucleus. Its subcellular location is the cytoplasm. Its function is as follows. Component of the cleavage factor Im (CFIm) complex that functions as an activator of the pre-mRNA 3'-end cleavage and polyadenylation processing required for the maturation of pre-mRNA into functional mRNAs. CFIm contributes to the recruitment of multiprotein complexes on specific sequences on the pre-mRNA 3'-end, so called cleavage and polyadenylation signals (pA signals). Most pre-mRNAs contain multiple pA signals, resulting in alternative cleavage and polyadenylation (APA) producing mRNAs with variable 3'-end formation. The CFIm complex acts as a key regulator of cleavage and polyadenylation site choice during APA through its binding to 5'-UGUA-3' elements localized in the 3'-untranslated region (UTR) for a huge number of pre-mRNAs. CPSF7 activates directly the mRNA 3'-processing machinery. Binds to pA signals in RNA substrates. The sequence is that of Cleavage and polyadenylation specificity factor subunit 7 from Mus musculus (Mouse).